A 571-amino-acid polypeptide reads, in one-letter code: MDTKKEIKNNNFICQIINKDLNENKNLSFYTRFPPEPNGYLHIGHAKSICLNFELASLYKGRCNLRFDDTNPLKENIKYIKSIKYDINWLGYKWHGNVRYASEYFLKLYQYAQELIKKGLAYVDHLTKEQIREYRGTLNTPGKNSPYRNRTIQENIELFEKMKKGDFSEGEACLRAKINMSSSSIIMRDPVLYRIIFIKHHQTQNKWCIYPMYDFAHCLSDSIEGITHSLCTLEFQDNKFLYNWILKNTSVKHYPKQYEFSRLNLEFSILSKRKIKILIDKNIIEGWDDPRIPTLSALRRKGYTPSSIKNFCQKIGVTKQNNLIEFSMLEHCIRKELNQTAIRTMAILDPIKIFLYNLDSNYKEEFIVPNHPNNPEMGTHKIIFTNTIYIDRSDFKEKYDKKYKRLKLGEKIRLRYSYIIHAEKIEKDEYGNISNIICYCDLNTLGRKPKDNKNPAVIHWISEKNTLSAEFKLYDQLFNIKNPEQQENFLLYINSKSLIKKFGFIEKKIGEEIQKKISNNNIEIFFQFERIGYFCIDFIDSKKNQLVFNRTVGLRDTWDSKKIKTKNITNN.

Positions 35–45 (PEPNGYLHIGH) match the 'HIGH' region motif. ATP contacts are provided by residues 36-38 (EPN) and 42-48 (HIGHAKS). Positions 68 and 213 each coordinate L-glutamine. Residues Thr-232, 262–263 (RL), and 270–272 (LSK) each bind ATP. Residues 269-273 (ILSKR) carry the 'KMSKS' region motif.

Belongs to the class-I aminoacyl-tRNA synthetase family. As to quaternary structure, monomer.

The protein resides in the cytoplasm. It catalyses the reaction tRNA(Gln) + L-glutamine + ATP = L-glutaminyl-tRNA(Gln) + AMP + diphosphate. This is Glutamine--tRNA ligase from Buchnera aphidicola subsp. Acyrthosiphon pisum (strain 5A).